The sequence spans 201 residues: 2-phospho-L-lactate guanylyltransferase (201 aa).

This sequence belongs to the CofC family. Homodimer.

It carries out the reaction (2S)-2-phospholactate + GTP + H(+) = (2S)-lactyl-2-diphospho-5'-guanosine + diphosphate. It participates in cofactor biosynthesis; coenzyme F420 biosynthesis. Functionally, guanylyltransferase that catalyzes the activation of (2S)-2-phospholactate (2-PL) as (2S)-lactyl-2-diphospho-5'-guanosine, via the condensation of 2-PL with GTP. It is involved in the biosynthesis of coenzyme F420, a hydride carrier cofactor. This is 2-phospho-L-lactate guanylyltransferase from Natronomonas pharaonis (strain ATCC 35678 / DSM 2160 / CIP 103997 / JCM 8858 / NBRC 14720 / NCIMB 2260 / Gabara) (Halobacterium pharaonis).